The chain runs to 369 residues: Glutamate 5-kinase (369 aa).

Lysine 9 serves as a coordination point for ATP. Substrate-binding residues include serine 49, aspartate 136, and asparagine 148. Residues 168-169 (TD) and 210-216 (TGGMLTK) each bind ATP. The PUA domain occupies 275–355 (QGEIYVDQGA…KGVVIHRDDW (81 aa)).

This sequence belongs to the glutamate 5-kinase family.

Its subcellular location is the cytoplasm. The catalysed reaction is L-glutamate + ATP = L-glutamyl 5-phosphate + ADP. It participates in amino-acid biosynthesis; L-proline biosynthesis; L-glutamate 5-semialdehyde from L-glutamate: step 1/2. Its function is as follows. Catalyzes the transfer of a phosphate group to glutamate to form L-glutamate 5-phosphate. The protein is Glutamate 5-kinase of Streptococcus gordonii (strain Challis / ATCC 35105 / BCRC 15272 / CH1 / DL1 / V288).